The following is a 549-amino-acid chain: MDVVEVAGSWWAQEREDIIMKYEKGHRAGLPEDKGPKPFRSYNNNVDHLGIVHETELPPLTAREAKQIRREISRKSKWVDMLGDWEKYKSSRKLIDRAYKGMPMNIRGPMWSVLLNTEEMKLKNPGRYQIMKEKGKRSSEHIQRIDRDVSGTLRKHIFFRDRYGTKQRELLHILLAYEEYNPEVGYCRDLSHIAALFLLYLPEEDAFWALVQLLASERHSLQGFHSPNGGTVQGLQDQQEHVVATSQPKTMGHQDKKDLCGQCSPLGCLIRILIDGISLGLTLRLWDVYLVEGEQALMPITRIAFKVQQKRLTKTSRCGPWARFCNRFVDTWARDEDTVLKHLRASMKKLTRKKGDLPPPAKPEQGSSASRPVPASRGGKTLCKGDRQAPPGPPARFPRPIWSASPPRAPRSSTPCPGGAVREDTYPVGTQGVPSPALAQGGPQGSWRFLQWNSMPRLPTDLDVEGPWFRHYDFRQSCWVRAISQEDQLAPCWQAEHPAERVRSAFAAPSTDSDQGTPFRARDEQQCAPTSGPCLCGLHLESSQFPPGF.

The Rab-GAP TBC domain occupies 101–293 (GMPMNIRGPM…RLWDVYLVEG (193 aa)). Residues Cys-318 and Cys-325 are each lipidated (S-palmitoyl cysteine). A disordered region spans residues 350–419 (LTRKKGDLPP…PRSSTPCPGG (70 aa)). The span at 398–417 (PRPIWSASPPRAPRSSTPCP) shows a compositional bias: low complexity.

Post-translationally, ubiquitinated by a CUL7-based E3 ligase, which leads to proteasomal degradation. In terms of processing, palmitoylation is required for membrane localization and protects TBC1D3 from ubiquitination. As to expression, expressed in liver, skeletal muscle, kidney, pancreas, spleen, testis, ovary, small intestine and peripheral blood leukocytes. Overexpressed in prostate cancers.

It is found in the cell membrane. In terms of biological role, acts as a GTPase activating protein for RAB5. Does not act on RAB4 or RAB11. The polypeptide is TBC1 domain family member 3 (TBC1D3) (Homo sapiens (Human)).